Reading from the N-terminus, the 307-residue chain is UDP-3-O-acyl-N-acetylglucosamine deacetylase (307 aa).

Residues histidine 78, histidine 241, and aspartate 245 each coordinate Zn(2+). Histidine 268 serves as the catalytic Proton donor.

This sequence belongs to the LpxC family. Zn(2+) is required as a cofactor.

The enzyme catalyses a UDP-3-O-[(3R)-3-hydroxyacyl]-N-acetyl-alpha-D-glucosamine + H2O = a UDP-3-O-[(3R)-3-hydroxyacyl]-alpha-D-glucosamine + acetate. The protein operates within glycolipid biosynthesis; lipid IV(A) biosynthesis; lipid IV(A) from (3R)-3-hydroxytetradecanoyl-[acyl-carrier-protein] and UDP-N-acetyl-alpha-D-glucosamine: step 2/6. Its function is as follows. Catalyzes the hydrolysis of UDP-3-O-myristoyl-N-acetylglucosamine to form UDP-3-O-myristoylglucosamine and acetate, the committed step in lipid A biosynthesis. The protein is UDP-3-O-acyl-N-acetylglucosamine deacetylase of Verminephrobacter eiseniae (strain EF01-2).